The primary structure comprises 549 residues: MKRVLTALAATLPFAANAADAISGAVERQPTNWQAIIMFLIFVVFTLGITYWASKRVRSRNDYYTAGGNITGFQNGLAIAGDYMSAASFLGISALVFTSGYDGLIYSLGFLVGWPIILFLIAERLRNLGRYTFADVASYRLKQGPIRILSACGSLVVVALYLIAQMVGAGKLIELLFGLNYHIAVVLVGVLMMMYVLFGGMLATTWVQIIKAVLLLFGASFMAFMVMKHVGFSFNNLFSEAMAVHPKGVDIMKPGGLVKDPISALSLGLGLMFGTAGLPHILMRFFTVSDAREARKSVFYATGFMGYFYILTFIIGFGAIMLVGANPEYKDAAGHLIGGNNMAAVHLANAVGGNLFLGFISAVAFATILAVVAGLTLAGASAVSHDLYANVFKKGATEREELRVSKITVLILGVIAIILGVLFENQNIAFMVGLAFAIAASCNFPIILLSMYWSKLTTRGAMMGGWLGLITAVVLMILGPTIWVQILGHEKAIFPYEYPALFSISVAFLGIWFFSATDNSAEGARERELFRAQFIRSQTGFGVEQGRAH.

13 consecutive transmembrane segments (helical) span residues 33-53, 77-97, 103-123, 148-168, 183-203, 206-226, 262-282, 303-323, 355-375, 404-424, 428-448, 464-484, and 493-513; these read WQAIIMFLIFVVFTLGITYWA, LAIAGDYMSAASFLGISALVF, GLIYSLGFLVGWPIILFLIAE, ILSACGSLVVVALYLIAQMVG, IAVVLVGVLMMMYVLFGGMLA, WVQIIKAVLLLFGASFMAFMV, ISALSLGLGLMFGTAGLPHIL, GFMGYFYILTFIIGFGAIMLV, LFLGFISAVAFATILAVVAGL, VSKITVLILGVIAIILGVLFE, IAFMVGLAFAIAASCNFPIIL, GGWLGLITAVVLMILGPTIWV, and IFPYEYPALFSISVAFLGIWF.

The protein belongs to the sodium:solute symporter (SSF) (TC 2.A.21) family.

Its subcellular location is the cell inner membrane. In terms of biological role, transports acetate. The chain is Cation/acetate symporter ActP from Escherichia coli O17:K52:H18 (strain UMN026 / ExPEC).